The chain runs to 394 residues: Fatty acid resistance protein FarA (394 aa).

The disordered stretch occupies residues Met1–Thr23. Residues Ala33–Trp53 traverse the membrane as a helical segment. The segment at Ser356–Thr376 is disordered.

Belongs to the membrane fusion protein (MFP) (TC 8.A.1) family. In terms of assembly, probably part of a tripartite efflux system FarAB-MtrE, which is composed of an inner membrane transporter, FarB, a periplasmic membrane fusion protein, FarA, and an outer membrane component, MtrE.

The protein localises to the cell inner membrane. Functionally, mediates resistance to long-chained antibacterial fatty acids (FAs). Function is dependent on the MtrE outer membrane protein. This chain is Fatty acid resistance protein FarA, found in Neisseria gonorrhoeae.